Reading from the N-terminus, the 450-residue chain is Keratin, type I cytoskeletal 25 (450 aa).

Residues 1 to 11 (MSLRLSSASRR) show a composition bias toward low complexity. The tract at residues 1–20 (MSLRLSSASRRSCPRPTTGS) is disordered. A head region spans residues 1-78 (MSLRLSSASR…VNERGLLSGN (78 aa)). The tract at residues 79 to 114 (EKVTMQNLNDRLASYLDSVHALEEANADLEQKIKGW) is coil 1A. Residues 79–394 (EKVTMQNLND…LLIGGDDGAC (316 aa)) enclose the IF rod domain. A linker 1 region spans residues 115–136 (YEKFGPGSCRGLDHDYSRYFPI). The interval 137 to 228 (IDDLKNQIIA…KNHKEEMQVL (92 aa)) is coil 1B. The linker 12 stretch occupies residues 229–251 (QCAAGGNVNVEMNAAPGVDLTVL). The tract at residues 252–390 (LNNMRAEYEA…ETYCLLIGGD (139 aa)) is coil 2. The segment at 391 to 450 (DGACKSGGYKSKDYGSGNVGSQVKDPAKAIVVKKVLEEVDQRSKILTTRLHSLEEKSQSN) is tail. Residue Ser-442 is modified to Phosphoserine.

Belongs to the intermediate filament family. As to quaternary structure, heterodimer of a type I and a type II keratin. Heterodimer with type II keratin KRT5 leading to the formation of keratin intermediate filament (KIF) network. Interacts with KRT6A to form filaments. As to expression, strongly expressed in skin and scalp, and weak expression observed in thymus and tongue. In the hair follicle, expressed in Henle layer, Huxley layer and in the inner root sheath cuticle of the hair follicle. Expression extends from the bulb region up to the point of differentiation into the three layers. Also present in the medulla of beard hair (at protein level).

The protein resides in the cytoplasm. Functionally, essential for the proper assembly of type I and type II keratin protein complexes and formation of keratin intermediate filaments in the inner root sheath (irs). Plays a role in the cytoskeleton organization. The chain is Keratin, type I cytoskeletal 25 from Homo sapiens (Human).